A 158-amino-acid chain; its full sequence is 2-C-methyl-D-erythritol 2,4-cyclodiphosphate synthase (158 aa).

A divalent metal cation is bound by residues Asp8 and His10. Residues 8–10 and 34–35 contribute to the 4-CDP-2-C-methyl-D-erythritol 2-phosphate site; these read DVH and HS. Residue His42 participates in a divalent metal cation binding. 4-CDP-2-C-methyl-D-erythritol 2-phosphate is bound by residues 56–58, 61–65, 100–106, 132–135, Phe139, and Arg142; these read DIG, FPDTD, AQAPKMA, and TTSE.

It belongs to the IspF family. In terms of assembly, homotrimer. A divalent metal cation is required as a cofactor.

The catalysed reaction is 4-CDP-2-C-methyl-D-erythritol 2-phosphate = 2-C-methyl-D-erythritol 2,4-cyclic diphosphate + CMP. The protein operates within isoprenoid biosynthesis; isopentenyl diphosphate biosynthesis via DXP pathway; isopentenyl diphosphate from 1-deoxy-D-xylulose 5-phosphate: step 4/6. Involved in the biosynthesis of isopentenyl diphosphate (IPP) and dimethylallyl diphosphate (DMAPP), two major building blocks of isoprenoid compounds. Catalyzes the conversion of 4-diphosphocytidyl-2-C-methyl-D-erythritol 2-phosphate (CDP-ME2P) to 2-C-methyl-D-erythritol 2,4-cyclodiphosphate (ME-CPP) with a corresponding release of cytidine 5-monophosphate (CMP). In Aliivibrio fischeri (strain ATCC 700601 / ES114) (Vibrio fischeri), this protein is 2-C-methyl-D-erythritol 2,4-cyclodiphosphate synthase.